The chain runs to 192 residues: Putative BTB/POZ domain-containing protein At4g04090 (192 aa).

The 74-residue stretch at 23–96 (VDVRLMARDS…TYSDGSMLSE (74 aa)) folds into the BTB domain.

Its pathway is protein modification; protein ubiquitination. Functionally, may act as a substrate-specific adapter of an E3 ubiquitin-protein ligase complex (CUL3-RBX1-BTB) which mediates the ubiquitination and subsequent proteasomal degradation of target proteins. The chain is Putative BTB/POZ domain-containing protein At4g04090 from Arabidopsis thaliana (Mouse-ear cress).